Reading from the N-terminus, the 354-residue chain is 5,10-methenyltetrahydromethanopterin hydrogenase (354 aa).

The protein belongs to the HMD family.

It catalyses the reaction 5,10-methenyl-5,6,7,8-tetrahydromethanopterin + H2 = 5,10-methylenetetrahydromethanopterin + H(+). The protein operates within one-carbon metabolism; methanogenesis from CO(2); 5,10-methylene-5,6,7,8-tetrahydromethanopterin from 5,10-methenyl-5,6,7,8-tetrahydromethanopterin (hydrogen route): step 1/1. Functionally, catalyzes the reversible reduction of methenyl-H(4)MPT(+) to methylene-H(4)MPT. This Methanococcus maripaludis (strain DSM 14266 / JCM 13030 / NBRC 101832 / S2 / LL) protein is 5,10-methenyltetrahydromethanopterin hydrogenase.